The sequence spans 364 residues: Urease accessory protein UreD (364 aa).

Disordered stretches follow at residues 1-37 and 201-250; these read MDQD…SSPA and PPEV…AGER. 3 stretches are compositionally biased toward low complexity: residues 21–37, 209–218, and 236–248; these read AGSA…SSPA, APDRGAPAAE, and AASS…APAG.

The protein belongs to the UreD family. As to quaternary structure, ureD, UreF and UreG form a complex that acts as a GTP-hydrolysis-dependent molecular chaperone, activating the urease apoprotein by helping to assemble the nickel containing metallocenter of UreC. The UreE protein probably delivers the nickel.

It is found in the cytoplasm. Required for maturation of urease via the functional incorporation of the urease nickel metallocenter. The protein is Urease accessory protein UreD of Kocuria rhizophila (strain ATCC 9341 / DSM 348 / NBRC 103217 / DC2201).